The primary structure comprises 278 residues: Biotin synthase (278 aa).

In terms of domain architecture, Radical SAM core spans 1–227; that stretch reads MQIMLCAISN…QSVVMVAGGR (227 aa). Cys16, Cys20, and Cys23 together coordinate [4Fe-4S] cluster. Cys60, Cys95, and Cys153 together coordinate [2Fe-2S] cluster.

This sequence belongs to the radical SAM superfamily. Biotin synthase family. In terms of assembly, homodimer. Requires [4Fe-4S] cluster as cofactor. [2Fe-2S] cluster serves as cofactor.

It carries out the reaction (4R,5S)-dethiobiotin + (sulfur carrier)-SH + 2 reduced [2Fe-2S]-[ferredoxin] + 2 S-adenosyl-L-methionine = (sulfur carrier)-H + biotin + 2 5'-deoxyadenosine + 2 L-methionine + 2 oxidized [2Fe-2S]-[ferredoxin]. It functions in the pathway cofactor biosynthesis; biotin biosynthesis; biotin from 7,8-diaminononanoate: step 2/2. Its function is as follows. Catalyzes the conversion of dethiobiotin (DTB) to biotin by the insertion of a sulfur atom into dethiobiotin via a radical-based mechanism. The sequence is that of Biotin synthase from Campylobacter jejuni subsp. jejuni serotype O:23/36 (strain 81-176).